The following is a 143-amino-acid chain: Sorting nexin-3 (143 aa).

The PX domain occupies 23-140 (NILEIDVINP…SSFLQSPEFK (118 aa)). A 1,2-diacyl-sn-glycero-3-phospho-(1D-myo-inositol-3-phosphate) is bound by residues arginine 66, serine 68, lysine 92, arginine 97, and arginine 106.

Belongs to the sorting nexin family.

It is found in the cytoplasm. The protein resides in the golgi apparatus membrane. Its subcellular location is the prevacuolar compartment membrane. In terms of biological role, required for retention of late Golgi membrane proteins. Component of the retrieval machinery that functions by direct interaction with the cytosolic tails of certain TGN membrane proteins during the sorting/budding process at the prevacuolar compartment. Binds phosphatidylinositol 3-phosphate (PtdIns(P3)). In Schizosaccharomyces pombe (strain 972 / ATCC 24843) (Fission yeast), this protein is Sorting nexin-3 (snx3).